Reading from the N-terminus, the 176-residue chain is Lipocalin-1 (176 aa).

The first 19 residues, 1-19, serve as a signal peptide directing secretion; that stretch reads MMRALLLAIGLGLVAALQA. A disulfide bond links Cys-80 and Cys-171.

This sequence belongs to the calycin superfamily. Lipocalin family. As to quaternary structure, predominantly monomer. May form homodimer. Interacts with LMBR1L; this interaction mediates the endocytosis of LCN1.

The protein resides in the secreted. Functionally, could play a role in taste reception. Could be necessary for the concentration and delivery of sapid molecules in the gustatory system. Can bind various ligands, with chemical structures ranging from lipids and retinoids to the macrocyclic antibiotic rifampicin and even to microbial siderophores. Exhibits an extremely wide ligand pocket. The sequence is that of Lipocalin-1 (LCN1) from Sus scrofa (Pig).